The following is a 378-amino-acid chain: 1-acyl-sn-glycerol-3-phosphate acyltransferase delta (378 aa).

The helical transmembrane segment at 11–31 threads the bilayer; it reads FLCHLVFCYVFIASGLIVNAI. The HXXXXD motif motif lies at 96-101; sequence HKFEID. The next 3 helical transmembrane spans lie at 125 to 145, 311 to 331, and 338 to 358; these read ELAY…IFCT, WLFW…SMVS, and LASL…MIGV.

Belongs to the 1-acyl-sn-glycerol-3-phosphate acyltransferase family. Expressed at a high levels in the brain, at intermediate or low levels in skeletal muscles, gut, kidney, spleen and lung. Barely detectable in heart and liver.

Its subcellular location is the endoplasmic reticulum membrane. The catalysed reaction is a 1-acyl-sn-glycero-3-phosphate + an acyl-CoA = a 1,2-diacyl-sn-glycero-3-phosphate + CoA. It carries out the reaction (4Z,7Z,10Z,13Z,16Z,19Z)-docosahexaenoyl-CoA + 1-hexadecanoyl-sn-glycero-3-phosphate = 1-hexadecanoyl-2-(4Z,7Z,10Z,13Z,16Z,19Z-docosahexaenoyl)-sn-glycero-3-phosphate + CoA. The enzyme catalyses 1-octadecanoyl-sn-glycero-3-phosphate + (9Z,12Z)-octadecadienoyl-CoA = 1-octadecanoyl-2-(9Z,12Z-octadecadienoyl)-sn-glycero-3-phosphate + CoA. It catalyses the reaction 1-octadecanoyl-sn-glycero-3-phosphate + (4Z,7Z,10Z,13Z,16Z,19Z)-docosahexaenoyl-CoA = 1-octadecanoyl-2-(4Z,7Z,10Z,13Z,16Z,19Z-docosahexaenoyl)-sn-glycero-3-phosphate + CoA. The catalysed reaction is (4Z,7Z,10Z,13Z,16Z,19Z)-docosahexaenoyl-CoA + 1-(9Z-octadecenoyl)-sn-glycero-3-phosphate = 1-(9Z-octadecenoyl)-2-(4Z,7Z,10Z,13Z,16Z,19Z-docosahexaenoyl)-sn-glycero-3-phosphate + CoA. It participates in phospholipid metabolism; CDP-diacylglycerol biosynthesis; CDP-diacylglycerol from sn-glycerol 3-phosphate: step 2/3. Functionally, converts 1-acyl-sn-glycerol-3-phosphate (lysophosphatidic acid or LPA) into 1,2-diacyl-sn-glycerol-3-phosphate (phosphatidic acid or PA) by incorporating an acyl moiety at the sn-2 position of the glycerol backbone. Exhibits high acyl-CoA specificity for polyunsaturated fatty acyl-CoA, especially docosahexaenoyl-CoA (22:6-CoA, DHA-CoA). The chain is 1-acyl-sn-glycerol-3-phosphate acyltransferase delta (Agpat4) from Mus musculus (Mouse).